The sequence spans 656 residues: CoB--CoM heterodisulfide reductase iron-sulfur subunit A 2 (656 aa).

152-175 (GGGVSGIQAALDLADMGFEVILVE) contributes to the FAD binding site. 4 4Fe-4S ferredoxin-type domains span residues 238-269 (KKPR…FDEG), 286-315 (SVFT…FDQE), 577-606 (IVSE…LVEK), and 610-639 (LVAE…QNHF). 16 residues coordinate [4Fe-4S] cluster: C248, C251, C254, C258, C295, C298, C301, C305, C586, C589, C592, C596, C619, C622, C625, and C629.

Belongs to the HdrA family. The ferredoxin:CoB-CoM heterodisulfide reductase is composed of three subunits; HdrA, HdrB and HdrC. It depends on [4Fe-4S] cluster as a cofactor. The cofactor is FAD.

Its pathway is cofactor metabolism; coenzyme M-coenzyme B heterodisulfide reduction; coenzyme B and coenzyme M from coenzyme M-coenzyme B heterodisulfide: step 1/1. In terms of biological role, part of a complex that catalyzes the reversible reduction of CoM-S-S-CoB to the thiol-coenzymes H-S-CoM (coenzyme M) and H-S-CoB (coenzyme B). The protein is CoB--CoM heterodisulfide reductase iron-sulfur subunit A 2 (hdrA2) of Methanopyrus kandleri (strain AV19 / DSM 6324 / JCM 9639 / NBRC 100938).